The chain runs to 275 residues: Apoptosis inhibitor 1 (275 aa).

2 BIR repeats span residues 24–91 (LIER…CVYA) and 126–193 (PSAR…CYFV). 4 residues coordinate Zn(2+): C163, C166, H183, and C190. The segment at 227 to 263 (CKVCLERQRDAVLLPCRHFCVCMQCYFALDGKCPTCR) adopts an RING-type zinc-finger fold.

Functionally, acts by blocking cellular apoptosis rather than by preventing viral stimulation of apoptosis. In Orgyia pseudotsugata (Douglas-fir tussock moth), this protein is Apoptosis inhibitor 1 (IAP1).